The sequence spans 129 residues: Small ribosomal subunit protein uS11 (129 aa).

It belongs to the universal ribosomal protein uS11 family. In terms of assembly, part of the 30S ribosomal subunit. Interacts with proteins S7 and S18. Binds to IF-3.

In terms of biological role, located on the platform of the 30S subunit, it bridges several disparate RNA helices of the 16S rRNA. Forms part of the Shine-Dalgarno cleft in the 70S ribosome. The chain is Small ribosomal subunit protein uS11 from Methylobacillus flagellatus (strain ATCC 51484 / DSM 6875 / VKM B-1610 / KT).